The following is a 638-amino-acid chain: Threonine--tRNA ligase (638 aa).

Residues methionine 1–threonine 61 enclose the TGS domain. The tract at residues aspartate 242–proline 533 is catalytic. Zn(2+)-binding residues include cysteine 333, histidine 384, and histidine 510.

This sequence belongs to the class-II aminoacyl-tRNA synthetase family. As to quaternary structure, homodimer. Requires Zn(2+) as cofactor.

Its subcellular location is the cytoplasm. The enzyme catalyses tRNA(Thr) + L-threonine + ATP = L-threonyl-tRNA(Thr) + AMP + diphosphate + H(+). In terms of biological role, catalyzes the attachment of threonine to tRNA(Thr) in a two-step reaction: L-threonine is first activated by ATP to form Thr-AMP and then transferred to the acceptor end of tRNA(Thr). Also edits incorrectly charged L-seryl-tRNA(Thr). This Prochlorococcus marinus (strain MIT 9215) protein is Threonine--tRNA ligase.